The sequence spans 317 residues: Vacuolar arginine/histidine antiporter YPQ2 (317 aa).

Residues 1-13 are Vacuolar-facing; sequence MSCSNGIWPTVSN. The PQ-loop 1 domain occupies 8-71; it reads WPTVSNLCGS…AKLTGQLLFQ (64 aa). The helical transmembrane segment at 14 to 34 threads the bilayer; sequence LCGSLSFFTSVISLFPQIIET. The Cytoplasmic segment spans residues 35–39; sequence YRDKS. The helical transmembrane segment at 40 to 62 threads the bilayer; that stretch reads VDGLSPYFLLAWLCGDITSLIGA. Residues 63-71 are Vacuolar-facing; it reads KLTGQLLFQ. A helical transmembrane segment spans residues 72-94; that stretch reads ILLAIYFLLNDSFVCGQYYYYGV. Over 95–143 the chain is Cytoplasmic; the sequence is LHENKLATVGHEPKPLLPELVENGELLREEEDMIQGGSSAESPRSSRRR. S136 carries the post-translational modification Phosphoserine. The chain crosses the membrane as a helical span at residues 144–164; sequence SAITAALAIAHTISTASAYPL. At 165 to 184 the chain is on the vacuolar side; sequence NVGSTQSQVGPPGDGKNSQL. The helical transmembrane segment at 185–205 threads the bilayer; it reads GTILSWIGASFYVGARIPQLI. The PQ-loop 2 domain maps to 185 to 247; that stretch reads GTILSWIGAS…SCRFLDNQNK (63 aa). The Cytoplasmic segment spans residues 206–215; that stretch reads KNYNRKSTDG. Residues 216 to 236 traverse the membrane as a helical segment; that stretch reads LSPFLFATTLLCNITYNLSIF. At 237-249 the chain is on the vacuolar side; it reads TSCRFLDNQNKRE. A helical transmembrane segment spans residues 250-270; sequence FIVNELPFIFGSAGTIAFDLI. At 271 to 317 the chain is on the cytoplasmic side; it reads YFYQYYILYATDMQLRELERELYSPEEDSAAQLVTERTSLLSGETQT.

It belongs to the laat-1 family.

It localises to the vacuole membrane. The catalysed reaction is L-histidine(out) + L-arginine(in) = L-histidine(in) + L-arginine(out). Amino acid transporter that moves arginine across the vacuolar membrane. Active during nitrogen starvation when it exports stored vacuolar arginine to the cytosol, for use as a nitrogen source. Has been shown to function as an arginine/histidine antiporter when substrate is present on both sides of the membrane, but may also function as a uniporter. The chain is Vacuolar arginine/histidine antiporter YPQ2 (YPQ2) from Saccharomyces cerevisiae (strain ATCC 204508 / S288c) (Baker's yeast).